The chain runs to 83 residues: Large ribosomal subunit protein bL31B (83 aa).

Belongs to the bacterial ribosomal protein bL31 family. Type B subfamily. As to quaternary structure, part of the 50S ribosomal subunit.

The protein is Large ribosomal subunit protein bL31B of Leifsonia xyli subsp. xyli (strain CTCB07).